A 427-amino-acid chain; its full sequence is Glutamate-1-semialdehyde 2,1-aminomutase (427 aa).

Lysine 265 bears the N6-(pyridoxal phosphate)lysine mark.

The protein belongs to the class-III pyridoxal-phosphate-dependent aminotransferase family. HemL subfamily. As to quaternary structure, homodimer. Requires pyridoxal 5'-phosphate as cofactor.

The protein resides in the cytoplasm. It carries out the reaction (S)-4-amino-5-oxopentanoate = 5-aminolevulinate. It participates in porphyrin-containing compound metabolism; protoporphyrin-IX biosynthesis; 5-aminolevulinate from L-glutamyl-tRNA(Glu): step 2/2. This is Glutamate-1-semialdehyde 2,1-aminomutase from Burkholderia multivorans (strain ATCC 17616 / 249).